The sequence spans 523 residues: GMP synthase [glutamine-hydrolyzing] (523 aa).

A Glutamine amidotransferase type-1 domain is found at 8 to 205 (KILILDFGSQ…VVNICGCETK (198 aa)). Catalysis depends on C85, which acts as the Nucleophile. Residues H179 and E181 contribute to the active site. Residues 206–398 (WTAENIIEDA…LGLPAEMLNR (193 aa)) form the GMPS ATP-PPase domain. 233 to 239 (SGGVDSS) is an ATP binding site.

In terms of assembly, homodimer.

It carries out the reaction XMP + L-glutamine + ATP + H2O = GMP + L-glutamate + AMP + diphosphate + 2 H(+). It participates in purine metabolism; GMP biosynthesis; GMP from XMP (L-Gln route): step 1/1. In terms of biological role, catalyzes the synthesis of GMP from XMP. The chain is GMP synthase [glutamine-hydrolyzing] from Glaesserella parasuis serovar 5 (strain SH0165) (Haemophilus parasuis).